A 121-amino-acid chain; its full sequence is Type II secretion system protein I (121 aa).

Residues 1–6 (MKKQSG) constitute a propeptide, leader sequence. Methionine 7 carries the post-translational modification N-methylmethionine. A helical membrane pass occupies residues 7–27 (MTLIEVMVALVVFALAGLAVM).

This sequence belongs to the GSP I family. As to quaternary structure, type II secretion is composed of four main components: the outer membrane complex, the inner membrane complex, the cytoplasmic secretion ATPase and the periplasm-spanning pseudopilus. Interacts with core component PulG. In terms of processing, cleaved by prepilin peptidase. Post-translationally, methylated by prepilin peptidase at the amino group of the N-terminal methionine once the leader sequence is cleaved by prepilin peptidase.

It localises to the cell inner membrane. In terms of biological role, component of the type II secretion system required for the energy-dependent secretion of extracellular factors such as proteases and toxins from the periplasm. Part of the pseudopilus tip complex that is critical for the recognition and binding of secretion substrates. In Klebsiella pneumoniae, this protein is Type II secretion system protein I (pulI).